The primary structure comprises 199 residues: Dephospho-CoA kinase (199 aa).

One can recognise a DPCK domain in the interval 11 to 199 (RIGLTGGIAS…DLHDQLDALL (189 aa)). Residue 19-24 (ASGKSS) coordinates ATP.

It belongs to the CoaE family.

It localises to the cytoplasm. The catalysed reaction is 3'-dephospho-CoA + ATP = ADP + CoA + H(+). Its pathway is cofactor biosynthesis; coenzyme A biosynthesis; CoA from (R)-pantothenate: step 5/5. Catalyzes the phosphorylation of the 3'-hydroxyl group of dephosphocoenzyme A to form coenzyme A. This chain is Dephospho-CoA kinase, found in Synechococcus sp. (strain CC9902).